The sequence spans 119 residues: UPF0102 protein Sare_1228 (119 aa).

The protein belongs to the UPF0102 family.

This is UPF0102 protein Sare_1228 from Salinispora arenicola (strain CNS-205).